A 288-amino-acid polypeptide reads, in one-letter code: Acetyl-coenzyme A carboxylase carboxyl transferase subunit beta (288 aa).

A CoA carboxyltransferase N-terminal domain is found at L34–N288. Zn(2+) is bound by residues C38, C41, C57, and C60. The C4-type zinc-finger motif lies at C38–C60.

This sequence belongs to the AccD/PCCB family. In terms of assembly, acetyl-CoA carboxylase is a heterohexamer composed of biotin carboxyl carrier protein (AccB), biotin carboxylase (AccC) and two subunits each of ACCase subunit alpha (AccA) and ACCase subunit beta (AccD). Requires Zn(2+) as cofactor.

It is found in the cytoplasm. It catalyses the reaction N(6)-carboxybiotinyl-L-lysyl-[protein] + acetyl-CoA = N(6)-biotinyl-L-lysyl-[protein] + malonyl-CoA. It participates in lipid metabolism; malonyl-CoA biosynthesis; malonyl-CoA from acetyl-CoA: step 1/1. Its function is as follows. Component of the acetyl coenzyme A carboxylase (ACC) complex. Biotin carboxylase (BC) catalyzes the carboxylation of biotin on its carrier protein (BCCP) and then the CO(2) group is transferred by the transcarboxylase to acetyl-CoA to form malonyl-CoA. The protein is Acetyl-coenzyme A carboxylase carboxyl transferase subunit beta of Desulforamulus reducens (strain ATCC BAA-1160 / DSM 100696 / MI-1) (Desulfotomaculum reducens).